Here is a 368-residue protein sequence, read N- to C-terminus: Nuclease EXOG, mitochondrial (368 aa).

A mitochondrion-targeting transit peptide spans 1–41; the sequence is MAAKSFASRLRDSRRFLNGFLAGAVVGAAGAGLTALQFFRR. His140 serves as the catalytic Proton acceptor. Asn171 serves as a coordination point for a divalent metal cation.

This sequence belongs to the DNA/RNA non-specific endonuclease family. As to quaternary structure, homodimer. It depends on a divalent metal cation as a cofactor.

The protein resides in the mitochondrion inner membrane. In terms of biological role, endo/exonuclease with nicking activity towards supercoiled DNA, a preference for single-stranded DNA and 5'-3' exonuclease activity. This Mus musculus (Mouse) protein is Nuclease EXOG, mitochondrial (Exog).